Here is a 472-residue protein sequence, read N- to C-terminus: UDP-N-acetylmuramate--L-alanine ligase (472 aa).

Residue 122 to 128 coordinates ATP; it reads GTHGKTT.

It belongs to the MurCDEF family.

The protein localises to the cytoplasm. The catalysed reaction is UDP-N-acetyl-alpha-D-muramate + L-alanine + ATP = UDP-N-acetyl-alpha-D-muramoyl-L-alanine + ADP + phosphate + H(+). The protein operates within cell wall biogenesis; peptidoglycan biosynthesis. Its function is as follows. Cell wall formation. The sequence is that of UDP-N-acetylmuramate--L-alanine ligase from Thermobifida fusca (strain YX).